We begin with the raw amino-acid sequence, 540 residues long: Coatomer subunit delta (540 aa).

Residues 169–263 (RHEEMLRGKR…GMILGGKSGT (95 aa)) form a disordered region. The segment covering 179–197 (SGGYTGISGGGGMGSGGMG) has biased composition (gly residues). Residues 212–229 (NNNNNNNNNNNNNNNNNN) show a composition bias toward low complexity. Residues 238–250 (SPNTSRPSAASSG) show a composition bias toward polar residues. Gly residues predominate over residues 251-261 (SQGGMILGGKS). Positions 304–540 (QEGVHITVEE…TLSVDTYEIK (237 aa)) constitute an MHD domain.

The protein belongs to the adaptor complexes medium subunit family. Delta-COP subfamily. In terms of assembly, oligomeric complex that consists of at least the alpha, beta, beta', gamma, delta, epsilon and zeta subunits.

The protein resides in the cytoplasm. It is found in the golgi apparatus membrane. It localises to the cytoplasmic vesicle. Its subcellular location is the COPI-coated vesicle membrane. Its function is as follows. The coatomer is a cytosolic protein complex that binds to dilysine motifs and reversibly associates with Golgi non-clathrin-coated vesicles, which further mediate biosynthetic protein transport from the ER, via the Golgi up to the trans Golgi network. Coatomer complex is required for budding from Golgi membranes, and is essential for the retrograde Golgi-to-ER transport of dilysine-tagged proteins. The chain is Coatomer subunit delta (copd) from Dictyostelium discoideum (Social amoeba).